The chain runs to 44 residues: uncharacterized protein (44 aa).

Residues 6-26 form a helical membrane-spanning segment; it reads SILIRGGGGVLIVLILLLWIV.

It localises to the membrane. This is an uncharacterized protein from Ornithodoros (relapsing fever ticks).